Consider the following 151-residue polypeptide: Arginine repressor (151 aa).

It belongs to the ArgR family.

It localises to the cytoplasm. It participates in amino-acid biosynthesis; L-arginine biosynthesis [regulation]. In terms of biological role, regulates arginine biosynthesis genes. This Enterococcus faecalis (strain ATCC 700802 / V583) protein is Arginine repressor.